We begin with the raw amino-acid sequence, 304 residues long: C-type lectin domain family 10 member A (304 aa).

Residues 1-35 (MIYENLQNSRIEEKTQEPGKAPSQSFLWRILSWTH) lie on the Cytoplasmic side of the membrane. A helical; Signal-anchor for type II membrane protein transmembrane segment spans residues 36 to 56 (LLLFSLGLSLLLLVVVSVIGS). The Extracellular segment spans residues 57-304 (QNSQLRRDLG…ICEMKLAKES (248 aa)). 2 N-linked (GlcNAc...) asparagine glycosylation sites follow: Asn74 and Asn166. In terms of domain architecture, C-type lectin spans 172-298 (CCPLHWTEHE…QRTFRWICEM (127 aa)). Disulfide bonds link Cys173–Cys184, Cys201–Cys296, and Cys274–Cys288.

As to quaternary structure, homooligomer. Interacts with SIGLEC1, which may act as a counter-receptor for CLEC10A in lymph node. Detected in lymph node in the subcapsular sinus, interfollicular regions, T and B-cell boundary and in the areas surrounding high endothelial venules (at protein level). Expressed on the surface of activated macrophages. Expressed in heart, lung, testis, skeletal muscle, spleen, brain, kidney and thymus. Expressed in P388, RAW 264.7 and M1 cell lines.

It localises to the membrane. Its function is as follows. Recognizes terminal galactose and N-acetylgalactosamine units. May participate in the interaction between tumoricidal macrophages and tumor cells. Plays a role in the recruitment of inflammatory monocytes to adipose tissue in diet-induced obesity. The protein is C-type lectin domain family 10 member A (Clec10a) of Mus musculus (Mouse).